The chain runs to 333 residues: DNA-directed RNA polymerase subunit alpha (333 aa).

The interval 1–234 (MQISVNEFLT…QQLAAFVDLK (234 aa)) is alpha N-terminal domain (alpha-NTD). Positions 248 to 333 (IDPILLRPVD…SLKKDDKATA (86 aa)) are alpha C-terminal domain (alpha-CTD).

It belongs to the RNA polymerase alpha chain family. As to quaternary structure, homodimer. The RNAP catalytic core consists of 2 alpha, 1 beta, 1 beta' and 1 omega subunit. When a sigma factor is associated with the core the holoenzyme is formed, which can initiate transcription.

It catalyses the reaction RNA(n) + a ribonucleoside 5'-triphosphate = RNA(n+1) + diphosphate. In terms of biological role, DNA-dependent RNA polymerase catalyzes the transcription of DNA into RNA using the four ribonucleoside triphosphates as substrates. In Pseudomonas fluorescens (strain ATCC BAA-477 / NRRL B-23932 / Pf-5), this protein is DNA-directed RNA polymerase subunit alpha.